The sequence spans 471 residues: Putative ABC transporter ATP-binding protein STK_11360 (471 aa).

ABC transporter domains are found at residues 4–241 (LEIK…LEPL) and 255–470 (VILE…VIKD). Residues 37–44 (GKSGSGKS) and 286–293 (GDNGSGKS) contribute to the ATP site.

This sequence belongs to the ABC transporter superfamily.

It is found in the cell membrane. In terms of biological role, probably part of an ABC transporter complex. Responsible for energy coupling to the transport system. This Sulfurisphaera tokodaii (strain DSM 16993 / JCM 10545 / NBRC 100140 / 7) (Sulfolobus tokodaii) protein is Putative ABC transporter ATP-binding protein STK_11360.